The sequence spans 468 residues: Sorting and assembly machinery component 50 homolog B (468 aa).

Residues 1–25 (MGTVHARSLDPLPMNGPDFGSPDDA) form a disordered region. The 81-residue stretch at 44 to 124 (VVVQRVHFEG…LDVTFEVTEL (81 aa)) folds into the POTRA domain.

This sequence belongs to the SAM50/omp85 family. As to quaternary structure, associates with the mitochondrial contact site and cristae organizing system (MICOS) complex (also known as MINOS or MitOS complex).

Its subcellular location is the mitochondrion outer membrane. Functionally, may play a role in the maintenance of the structure of mitochondrial cristae. This Xenopus laevis (African clawed frog) protein is Sorting and assembly machinery component 50 homolog B (samm50-b).